Here is a 357-residue protein sequence, read N- to C-terminus: 3-dehydroquinate synthase (357 aa).

NAD(+)-binding positions include 104 to 108 (GVVGD), 128 to 129 (TT), Lys-141, and 168 to 171 (FLET). Glu-183, His-243, and His-260 together coordinate Zn(2+).

The protein belongs to the sugar phosphate cyclases superfamily. Dehydroquinate synthase family. The cofactor is Co(2+). Requires Zn(2+) as cofactor. NAD(+) is required as a cofactor.

It is found in the cytoplasm. The catalysed reaction is 7-phospho-2-dehydro-3-deoxy-D-arabino-heptonate = 3-dehydroquinate + phosphate. Its pathway is metabolic intermediate biosynthesis; chorismate biosynthesis; chorismate from D-erythrose 4-phosphate and phosphoenolpyruvate: step 2/7. In terms of biological role, catalyzes the conversion of 3-deoxy-D-arabino-heptulosonate 7-phosphate (DAHP) to dehydroquinate (DHQ). This Streptococcus pyogenes serotype M5 (strain Manfredo) protein is 3-dehydroquinate synthase.